We begin with the raw amino-acid sequence, 1222 residues long: Kinesin-related protein 9 (1222 aa).

The segment covering 1–25 has biased composition (polar residues); the sequence is MDNNNNNFSTPKQPTINSTTGGQLR. Disordered stretches follow at residues 1 to 55, 75 to 165, and 188 to 343; these read MDNN…ITNS, MDSL…STNI, and SSNT…TQPL. Low complexity predominate over residues 26 to 55; the sequence is SRSNSSPSTSSISTPRNGSTTATTSSITNS. Residues 75–85 show a composition bias toward polar residues; sequence MDSLSTPMSQS. Low complexity-rich tracts occupy residues 122–165, 194–209, 216–238, and 254–325; these read SFIS…STNI, SSLP…PLSN, NHHL…ISTT, and NLTT…RTPI. Positions 326-343 are enriched in polar residues; that stretch reads QNFNSVGGVNITSKTQPL. The Kinesin motor domain occupies 350–719; the sequence is SIQAVCRFRP…LNFGQRAQSV (370 aa). 438–445 contacts ATP; sequence GQTGAGKT. Positions 724 to 1026 form a coiled coil; sequence LQNVEESHSE…DTLTNKLEIQ (303 aa). The interval 1144–1174 is disordered; sequence NINNNNNIKNNNNNNKLKSKKVGSSSSSSSN. A helical transmembrane segment spans residues 1183–1203; sequence ILFFLIILVILFFLMVAVGLT.

It belongs to the TRAFAC class myosin-kinesin ATPase superfamily. Kinesin family.

The protein resides in the membrane. It localises to the cytoplasm. It is found in the cytoskeleton. Its function is as follows. Microtubule-associated force-producing protein that plays a role in organelle transport. Its motor activity is directed toward the microtubule's plus end. The protein is Kinesin-related protein 9 (kif9) of Dictyostelium discoideum (Social amoeba).